A 72-amino-acid chain; its full sequence is Putative beta-neurotoxin (72 aa).

The N-terminal stretch at 1-7 (IDMVVEC) is a signal peptide. The LCN-type CS-alpha/beta domain occupies 9–71 (KDGYLMEHDG…TWSRATNRCG (63 aa)). Cystine bridges form between C19–C70, C23–C45, C31–C51, and C35–C53.

As to expression, expressed by the venom gland.

It is found in the secreted. Functionally, beta toxins bind voltage-independently at site-4 of sodium channels (Nav) and shift the voltage of activation toward more negative potentials thereby affecting sodium channel activation and promoting spontaneous and repetitive firing. The sequence is that of Putative beta-neurotoxin from Tityus pachyurus (Colombian scorpion).